We begin with the raw amino-acid sequence, 297 residues long: SH2 domain-containing protein 6 (297 aa).

2 disordered regions span residues 1–61 (MSCP…FPTR) and 74–93 (MNPQ…RGTS). Pro residues predominate over residues 36 to 45 (PSKPPLPPPQ). The region spanning 187–295 (WYSGNCDRQS…RGLTYLRFPT (109 aa)) is the SH2 domain.

This is SH2 domain-containing protein 6 (Sh2d6) from Mus musculus (Mouse).